The chain runs to 1065 residues: MSSLDEGLKQMSQQEYRNEEQNQEGNQEDLNNQNDHNLNNNELDSLSSPPSDNYNEEEFEQEDDIKPDIKIYQNASQNNISQTQRISQTQLPQQQGGGGKRNSSLLQKEHYHQKNQEIIQKLMEKKKKEQEEKEKKELKLKKREDKLRKRMLEEAAKIREQKEVNLESQTEQSDHSNVTKSKKLKFKSVQDIYQLVVIQGKYQREQLTDKQQQELNEFESRLNEEKTTIIKMQQVYRSRQITFLEELKKKQEKKKQEEEQQKLKQEKIQTKLREQYENVNSNLYAETELFKQKKQEITKVSTQKQLVRASSAEGDKEKDDKKDIAKKIQQKNQEYIEKLKEKKRQEIAKEEEEKKKKEQLKEKMKDFVLVNIKKDIENGVFFVDVPEKKPKKEKKKNESKEDNIQITSPKLNSTKSLSSQITRKTNDAKKVEKLPKIKDSNKENHSKERNEDNEEGDDGEYECDEGDEGASDGEDEDDGNGSAIKRKLRKYPFITDLELWKKKQRLPADIKVFIVTGGYHDISKALKKRGWIANPDTKSPCYNFRWSLQTKDIDYENLKDFQIVNHFQKSACITTKVGLCKSLRNLVWHENVDIDTFYPRCFDLNDTEDFENFVEEFKSSKAESILKRYMRMYFEKDPDIEKIKKQAVIAFNVCERKMKELDEIIDDPNSIQLITKKEWNILSADELTEEKLAQKKYEQWLERIEGKNKQKPKKKKKKSKKDKQQGDTEKKEEEEGEAEDEEEDEEDEEEEEKQMDEFTLKVHQILKRYKVKYPQDCLTGEDNVWIIKPAGLSRGRGITCYNNLVEILDHVKSKESQWVIQKYIENPLIIKKRKFDIRVWILVTDWNPLTIWHYTDCYVRFSVDDYDTENLQNKFTHLTNNMVSKLKQRDEKDDITELGSMYFKENFINYLKEKEGYDVFTDKIEPQIVRAIIMSLKSVQDNIENRKNSIEMYGYDFMVDDLYNTWLIEINSSPSMEYSTPVTERLVKAVSEDIVKVVIDYGMEKSKKARKNIETGAFKRIYKGKYVEEKTNVVGLNLICEGVALKKGKKNSNVAKVNNLKPNFS.

Disordered regions lie at residues 1-146, 158-182, 301-326, 341-360, 381-482, and 708-755; these read MSSL…REDK, IREQ…TKSK, STQK…DIAK, EKKR…KEQL, FFVD…GNGS, and NKQK…EKQM. The segment covering 23 to 53 has biased composition (low complexity); it reads QEGNQEDLNNQNDHNLNNNELDSLSSPPSDN. Over residues 54 to 63 the composition is skewed to acidic residues; sequence YNEEEFEQED. A compositionally biased stretch (polar residues) spans 73–92; sequence QNASQNNISQTQRISQTQLP. The span at 122-146 shows a compositional bias: basic and acidic residues; it reads LMEKKKKEQEEKEKKELKLKKREDK. The segment covering 166–179 has biased composition (polar residues); sequence LESQTEQSDHSNVT. The segment covering 313-326 has biased composition (basic and acidic residues); sequence EGDKEKDDKKDIAK. Positions 385–403 are enriched in basic and acidic residues; that stretch reads VPEKKPKKEKKKNESKEDN. Over residues 404–423 the composition is skewed to polar residues; the sequence is IQITSPKLNSTKSLSSQITR. The segment covering 424 to 450 has biased composition (basic and acidic residues); the sequence is KTNDAKKVEKLPKIKDSNKENHSKERN. The segment covering 451–479 has biased composition (acidic residues); the sequence is EDNEEGDDGEYECDEGDEGASDGEDEDDG. In terms of domain architecture, TTL spans 633 to 1009; the sequence is YFEKDPDIEK…DYGMEKSKKA (377 aa). Residues 709–721 show a composition bias toward basic residues; it reads KQKPKKKKKKSKK. Basic and acidic residues predominate over residues 722–733; sequence DKQQGDTEKKEE. Residues 734 to 754 are compositionally biased toward acidic residues; that stretch reads EEGEAEDEEEDEEDEEEEEKQ. Residues 821–824, Lys834, and Asp836 contribute to the ATP site; that span reads QKYI.

The protein localises to the cell projection. It localises to the cilium. It is found in the cytoplasm. Its subcellular location is the cytoskeleton. The protein resides in the cilium axoneme. In terms of biological role, probable glycylase which modifies tubulin, generating side chains of glycine on the gamma-carboxyl groups of specific glutamate residues within the C-terminal tail of tubulin. This Tetrahymena thermophila (strain SB210) protein is Tubulin glycylase 3C (TTLL3C).